Consider the following 840-residue polypeptide: Homeobox-leucine zipper protein HOX9 (840 aa).

Disordered regions lie at residues Met-1–Asp-26 and Asn-135–Asn-160. The span at Gly-12–Asp-21 shows a compositional bias: gly residues. A DNA-binding region (homeobox) is located at residues Asp-26–Lys-89. A coiled-coil region spans residues Lys-86–Asn-135. The START domain occupies Asp-157–Val-385.

This sequence belongs to the HD-ZIP homeobox family. Class III subfamily. In terms of tissue distribution, expressed in seedlings, roots, stems, leaf sheaths and blades and panicles.

It localises to the nucleus. Functionally, probable transcription factor. The protein is Homeobox-leucine zipper protein HOX9 (HOX9) of Oryza sativa subsp. indica (Rice).